The sequence spans 224 residues: uncharacterized protein (224 aa).

Positions 1-30 are cleaved as a signal peptide; that stretch reads MSRSSSSMATVLVVLMVVSAGGLSPPCAAA. N-linked (GlcNAc...) asparagine glycosylation occurs at N141.

Its subcellular location is the secreted. This is an uncharacterized protein from Oryza sativa subsp. japonica (Rice).